Consider the following 204-residue polypeptide: MLPFPAMNLKKSRSENSSVASSGSKIEEQTEKSAEPTTIKVQKKAGTPGRSIDVFAVQCEKCMKWRKIDTQDEYEDIRSRVQEDPFFCKTKEGVSCEDVGDLNYDSSRTWVIDKPGLPRTPRGFKRSLILRKDYSKMDAYYITPTGKKLKSRNEIAAFIDANQDYKYALLGDFNFTVPKVMEETVPSGILSDRTPKPSRKVTID.

Residues 1–46 (MLPFPAMNLKKSRSENSSVASSGSKIEEQTEKSAEPTTIKVQKKAG) form a disordered region. Polar residues predominate over residues 15 to 24 (ENSSVASSGS). Residues 25-34 (KIEEQTEKSA) show a composition bias toward basic and acidic residues. The CW-type zinc finger occupies 49 to 104 (GRSIDVFAVQCEKCMKWRKIDTQDEYEDIRSRVQEDPFFCKTKEGVSCEDVGDLNY). Positions 58 to 96 (QCEKCMKWRKIDTQDEYEDIRSRVQEDPFFCKTKEGVSC) match the MBD-associated domain (MAD) motif. Residues Cys-59, Cys-62, Cys-88, and Cys-96 each contribute to the Zn(2+) site. The 71-residue stretch at 110-180 (WVIDKPGLPR…GDFNFTVPKV (71 aa)) folds into the MBD domain.

Mostly expressed in flowers and buds.

Its subcellular location is the nucleus. Probable transcriptional regulator. The chain is Methyl-CpG-binding domain-containing protein 1 (MBD1) from Arabidopsis thaliana (Mouse-ear cress).